We begin with the raw amino-acid sequence, 428 residues long: 3-phosphoshikimate 1-carboxyvinyltransferase (428 aa).

3-phosphoshikimate contacts are provided by K21, S22, and R26. A phosphoenolpyruvate-binding site is contributed by K21. 2 residues coordinate phosphoenolpyruvate: G91 and R119. Positions 164, 166, 313, and 340 each coordinate 3-phosphoshikimate. Q166 lines the phosphoenolpyruvate pocket. D313 serves as the catalytic Proton acceptor. Residues R344 and R386 each coordinate phosphoenolpyruvate.

This sequence belongs to the EPSP synthase family. In terms of assembly, monomer.

The protein localises to the cytoplasm. The catalysed reaction is 3-phosphoshikimate + phosphoenolpyruvate = 5-O-(1-carboxyvinyl)-3-phosphoshikimate + phosphate. It functions in the pathway metabolic intermediate biosynthesis; chorismate biosynthesis; chorismate from D-erythrose 4-phosphate and phosphoenolpyruvate: step 6/7. Catalyzes the transfer of the enolpyruvyl moiety of phosphoenolpyruvate (PEP) to the 5-hydroxyl of shikimate-3-phosphate (S3P) to produce enolpyruvyl shikimate-3-phosphate and inorganic phosphate. This chain is 3-phosphoshikimate 1-carboxyvinyltransferase, found in Campylobacter jejuni subsp. doylei (strain ATCC BAA-1458 / RM4099 / 269.97).